Here is a 121-residue protein sequence, read N- to C-terminus: Small ribosomal subunit protein uS13 (121 aa).

A disordered region spans residues 94-121 (GLPMRGQRTRTNARTRKGPRKGAAALKK).

Belongs to the universal ribosomal protein uS13 family. Part of the 30S ribosomal subunit. Forms a loose heterodimer with protein S19. Forms two bridges to the 50S subunit in the 70S ribosome.

In terms of biological role, located at the top of the head of the 30S subunit, it contacts several helices of the 16S rRNA. In the 70S ribosome it contacts the 23S rRNA (bridge B1a) and protein L5 of the 50S subunit (bridge B1b), connecting the 2 subunits; these bridges are implicated in subunit movement. Contacts the tRNAs in the A and P-sites. The sequence is that of Small ribosomal subunit protein uS13 from Delftia acidovorans (strain DSM 14801 / SPH-1).